A 291-amino-acid polypeptide reads, in one-letter code: Flavin-dependent thymidylate synthase (291 aa).

Residues 31–241 (GFVRVVDYMG…PMVHAAFVEY (211 aa)) enclose the ThyX domain. FAD is bound by residues serine 77, 100–102 (RHR), and glutamate 108. Residues 97–100 (QWVR), 108–112 (EYSAR), and arginine 180 each bind dUMP. Positions 100–110 (RHRTASINEYS) match the ThyX motif motif. 196 to 198 (NLH) lines the FAD pocket. Arginine 207 provides a ligand contact to dUMP. Catalysis depends on arginine 207, which acts as the Involved in ionization of N3 of dUMP, leading to its activation.

The protein belongs to the thymidylate synthase ThyX family. As to quaternary structure, homotetramer. FAD serves as cofactor.

The catalysed reaction is dUMP + (6R)-5,10-methylene-5,6,7,8-tetrahydrofolate + NADPH + H(+) = dTMP + (6S)-5,6,7,8-tetrahydrofolate + NADP(+). It participates in pyrimidine metabolism; dTTP biosynthesis. In terms of biological role, catalyzes the reductive methylation of 2'-deoxyuridine-5'-monophosphate (dUMP) to 2'-deoxythymidine-5'-monophosphate (dTMP) while utilizing 5,10-methylenetetrahydrofolate (mTHF) as the methyl donor, and NADPH and FADH(2) as the reductant. This chain is Flavin-dependent thymidylate synthase, found in Anaplasma marginale (strain St. Maries).